The primary structure comprises 1171 residues: Protein WWC2 (1171 aa).

WW domains are found at residues 9–42 (LPLPDGWEEARDYDGKVFYIDHNSRQTSWIDPRD) and 56–89 (NELPWGWESSYDPQIGVYFINHINQTTQIEDPRK). 3 coiled-coil regions span residues 120–193 (KEQR…YKEQ), 223–257 (ELKSIRKAISTGEKEKQDLMQSLVKLKERFHLEEA), and 301–420 (LAEK…KSAT). 2 disordered regions span residues 521 to 552 (SPTAQQDTQDAKPPKSVTSLSSLSSLSSLSPP) and 603 to 637 (QALAERKSTGEGLRHQSSASQEGRTDIEFPRKNPD). Positions 534–551 (PKSVTSLSSLSSLSSLSP) are enriched in low complexity. Composition is skewed to basic and acidic residues over residues 606 to 616 (AERKSTGEGLR) and 625 to 637 (GRTDIEFPRKNPD). Positions 684-806 (GAAQAQLILR…FSNDVHTQWY (123 aa)) constitute a C2 domain. 2 coiled-coil regions span residues 836–870 (LDLDAVSALLERTSAELEAVEQELAQEDDDQEQLC) and 1047–1123 (DLEL…NAEK).

It belongs to the WWC family.

Its subcellular location is the cytoplasm. It localises to the cytosol. Negative regulator of the Hippo signaling pathway, also known as the Salvador-Warts-Hippo (SWH) pathway. The polypeptide is Protein WWC2 (wwc2) (Xenopus tropicalis (Western clawed frog)).